The sequence spans 294 residues: Acetyl-coenzyme A carboxylase carboxyl transferase subunit beta (294 aa).

A CoA carboxyltransferase N-terminal domain is found at 30-294; the sequence is IMTKCPECKK…PETGGESDGE (265 aa). The Zn(2+) site is built by C34, C37, C53, and C56. A C4-type zinc finger spans residues 34–56; it reads CPECKKIMYTKELQKNLMVCNYC.

The protein belongs to the AccD/PCCB family. As to quaternary structure, acetyl-CoA carboxylase is a heterohexamer composed of biotin carboxyl carrier protein (AccB), biotin carboxylase (AccC) and two subunits each of ACCase subunit alpha (AccA) and ACCase subunit beta (AccD). Requires Zn(2+) as cofactor.

The protein resides in the cytoplasm. The enzyme catalyses N(6)-carboxybiotinyl-L-lysyl-[protein] + acetyl-CoA = N(6)-biotinyl-L-lysyl-[protein] + malonyl-CoA. It functions in the pathway lipid metabolism; malonyl-CoA biosynthesis; malonyl-CoA from acetyl-CoA: step 1/1. In terms of biological role, component of the acetyl coenzyme A carboxylase (ACC) complex. Biotin carboxylase (BC) catalyzes the carboxylation of biotin on its carrier protein (BCCP) and then the CO(2) group is transferred by the transcarboxylase to acetyl-CoA to form malonyl-CoA. The chain is Acetyl-coenzyme A carboxylase carboxyl transferase subunit beta from Listeria welshimeri serovar 6b (strain ATCC 35897 / DSM 20650 / CCUG 15529 / CIP 8149 / NCTC 11857 / SLCC 5334 / V8).